A 257-amino-acid polypeptide reads, in one-letter code: 1-(5-phosphoribosyl)-5-[(5-phosphoribosylamino)methylideneamino] imidazole-4-carboxamide isomerase (257 aa).

Residue Asp8 is the Proton acceptor of the active site. Asp129 acts as the Proton donor in catalysis.

The protein belongs to the HisA/HisF family.

The protein resides in the cytoplasm. The catalysed reaction is 1-(5-phospho-beta-D-ribosyl)-5-[(5-phospho-beta-D-ribosylamino)methylideneamino]imidazole-4-carboxamide = 5-[(5-phospho-1-deoxy-D-ribulos-1-ylimino)methylamino]-1-(5-phospho-beta-D-ribosyl)imidazole-4-carboxamide. Its pathway is amino-acid biosynthesis; L-histidine biosynthesis; L-histidine from 5-phospho-alpha-D-ribose 1-diphosphate: step 4/9. The sequence is that of 1-(5-phosphoribosyl)-5-[(5-phosphoribosylamino)methylideneamino] imidazole-4-carboxamide isomerase from Trichodesmium erythraeum (strain IMS101).